We begin with the raw amino-acid sequence, 69 residues long: DNA-directed RNA polymerase subunit omega (69 aa).

It belongs to the RNA polymerase subunit omega family. As to quaternary structure, the RNAP catalytic core consists of 2 alpha, 1 beta, 1 beta' and 1 omega subunit. When a sigma factor is associated with the core the holoenzyme is formed, which can initiate transcription.

It carries out the reaction RNA(n) + a ribonucleoside 5'-triphosphate = RNA(n+1) + diphosphate. Promotes RNA polymerase assembly. Latches the N- and C-terminal regions of the beta' subunit thereby facilitating its interaction with the beta and alpha subunits. This chain is DNA-directed RNA polymerase subunit omega, found in Geobacter metallireducens (strain ATCC 53774 / DSM 7210 / GS-15).